The following is a 915-amino-acid chain: Coiled-coil domain-containing protein 57 (915 aa).

The centrosomal targeting domain stretch occupies residues 1–502 (MLPLGSEPAL…MHGLPRPGAQ (502 aa)). 4 coiled-coil regions span residues 92 to 173 (VSEL…QRQE), 214 to 422 (LEAL…LERD), 456 to 483 (KSQVAAKLQETEQALQEQEVVLKAVTLE), and 521 to 548 (IQRLREQNTSLRNAIAQMRKEMEALSHQ). Disordered regions lie at residues 555–574 (TAAESTDANQPDPEAGGDAA), 606–653 (PLKM…QAGP), and 724–915 (QHGG…NIMD). The microtubule binding domain stretch occupies residues 606–915 (PLKMSSPHAE…PKIRNYNIMD (310 aa)). The span at 613-627 (HAESQPSVRTSTETT) shows a compositional bias: polar residues. Over residues 628-652 (GGSAQAGQAGGSVQAGQAGGSVQAG) the composition is skewed to low complexity. The span at 745-758 (GREDAKSAEDEAPS) shows a compositional bias: basic and acidic residues. Polar residues-rich tracts occupy residues 781 to 794 (PKTQHSIHTVTCKS), 819 to 830 (SHSSSSFASGTL), and 841 to 852 (SSPSGVTSQGDS). Residues 879-891 (KTAAQAKAKTTGA) are compositionally biased toward low complexity.

In terms of assembly, interacts with CEP63; the interaction is required for their location to proximal end of centrioles. Interacts with microtubules.

Its subcellular location is the cytoplasm. The protein resides in the cytoskeleton. The protein localises to the microtubule organizing center. It localises to the centrosome. It is found in the centriolar satellite. Its subcellular location is the centriole. The protein resides in the spindle. Its function is as follows. Pleiotropic regulator of centriole duplication, mitosis, and ciliogenesis. Critical interface between centrosome and microtubule-mediated cellular processes. Centriole duplication protein required for recruitment of CEP63, CEP152, and PLK4 to the centrosome. Independent of its centrosomal targeting, localizes to and interacts with microtubules and regulates microtubule nucleation, stability, and mitotic progression. The chain is Coiled-coil domain-containing protein 57 from Homo sapiens (Human).